The following is a 573-amino-acid chain: Poly(ribitol-phosphate) beta-N-acetylglucosaminyltransferase TarS (573 aa).

UDP-N-acetyl-alpha-D-glucosamine contacts are provided by residues Pro-9, Asp-41, Asn-68, Arg-76, 92–94 (DSD), Arg-127, and Glu-178. Asp-94 is a binding site for Mn(2+). Asp-179 (proton acceptor) is an active-site residue. UDP-N-acetyl-alpha-D-glucosamine-binding positions include Arg-207 and 211 to 213 (HMS).

The protein belongs to the glycosyltransferase 2 family. Homotrimer. Requires Mn(2+) as cofactor.

The catalysed reaction is 4-O-[(D-ribitylphospho)(n)-di{(2R)-glycerylphospho}]-N-acetyl-beta-D-mannosaminyl-(1-&gt;4)-N-acetyl-alpha-D-glucosaminyl di-trans,octa-cis-undecaprenyl diphosphate + n UDP-N-acetyl-alpha-D-glucosamine = 4-O-([2-N-acetyl-beta-D-glucosaminyl-1-D-ribitylphospho](n)-di{[2R]-1-glycerylphospho})-N-acetyl-beta-D-mannosaminyl-(1-&gt;4)-N-acetyl-alpha-D-glucosaminyl di-trans,octa-cis-undecaprenyl diphosphate + n UDP + n H(+). It participates in cell wall biogenesis; poly(ribitol phosphate) teichoic acid biosynthesis. Functionally, attaches beta-O-GlcNAc (beta-O-N-acetyl-D-glucosamine) residues to the C4 position of poly(RboP)-wall teichoic acids (WTAs). Prefers UDP-GlcNAc as a donor substrate and is specific for poly(ribitol phosphate) WTAs. Can also use UDP-Glc and UDP-GalNAc, but not UDP-galactose or UDP-glucuronic acid. Mediates beta-lactam resistance in methicillin resistant Staphylococcus aureus (MRSA) strains. The chain is Poly(ribitol-phosphate) beta-N-acetylglucosaminyltransferase TarS from Staphylococcus aureus (strain MW2).